The chain runs to 411 residues: NADH-quinone oxidoreductase subunit D (411 aa).

It belongs to the complex I 49 kDa subunit family. In terms of assembly, NDH-1 is composed of 14 different subunits. Subunits NuoB, C, D, E, F, and G constitute the peripheral sector of the complex.

It localises to the cell inner membrane. It carries out the reaction a quinone + NADH + 5 H(+)(in) = a quinol + NAD(+) + 4 H(+)(out). In terms of biological role, NDH-1 shuttles electrons from NADH, via FMN and iron-sulfur (Fe-S) centers, to quinones in the respiratory chain. The immediate electron acceptor for the enzyme in this species is believed to be ubiquinone. Couples the redox reaction to proton translocation (for every two electrons transferred, four hydrogen ions are translocated across the cytoplasmic membrane), and thus conserves the redox energy in a proton gradient. The polypeptide is NADH-quinone oxidoreductase subunit D (Phenylobacterium zucineum (strain HLK1)).